The sequence spans 254 residues: tRNA (guanine-N(7)-)-methyltransferase (254 aa).

Residues 1 to 34 (MNTNTPAHPPEGAPLSEATQAALASAEHAPDSPG) are disordered. 4 residues coordinate S-adenosyl-L-methionine: E87, E112, D139, and D162. The active site involves D162. Substrate contacts are provided by residues K166, D198, and 233–236 (TKFE).

Belongs to the class I-like SAM-binding methyltransferase superfamily. TrmB family.

The enzyme catalyses guanosine(46) in tRNA + S-adenosyl-L-methionine = N(7)-methylguanosine(46) in tRNA + S-adenosyl-L-homocysteine. The protein operates within tRNA modification; N(7)-methylguanine-tRNA biosynthesis. Functionally, catalyzes the formation of N(7)-methylguanine at position 46 (m7G46) in tRNA. In Bordetella pertussis (strain Tohama I / ATCC BAA-589 / NCTC 13251), this protein is tRNA (guanine-N(7)-)-methyltransferase.